Consider the following 256-residue polypeptide: Non-specific lipid transfer protein GPI-anchored 23 (256 aa).

The N-terminal stretch at 1-21 (MKPSFVLLSIVLLLSSSLSDA) is a signal peptide. N-linked (GlcNAc...) asparagine glycosylation is present at Asn41. Cystine bridges form between Cys45/Cys88, Cys55/Cys72, Cys73/Cys113, and Cys86/Cys121. Residues 125-230 (TPAASTPVSP…SPSPSPSPSI (106 aa)) form a disordered region. Positions 138–230 (SPTTSPSSAK…SPSPSPSPSI (93 aa)) are enriched in low complexity. Residue Ser225 is the site of GPI-anchor amidated serine attachment. A propeptide spans 226–256 (PSPSISSSGILLVSKLFIAVVMVSSFLYILA) (removed in mature form).

It belongs to the plant LTP family. Confined to the anthers of the inflorescence.

It is found in the cell membrane. Functionally, probable lipid transfer protein. This is Non-specific lipid transfer protein GPI-anchored 23 from Arabidopsis thaliana (Mouse-ear cress).